The chain runs to 102 residues: Monothiol glutaredoxin-S8 (102 aa).

One can recognise a Glutaredoxin domain in the interval Met-1–Trp-101. A [2Fe-2S] cluster-binding site is contributed by Cys-21. The Responsive for interaction with TGA factors motif lies at Ala-99–Leu-102.

Belongs to the glutaredoxin family. CC-type subfamily.

The protein localises to the cytoplasm. The protein resides in the nucleus. Functionally, may only reduce GSH-thiol disulfides, but not protein disulfides. The chain is Monothiol glutaredoxin-S8 (GRXS8) from Arabidopsis thaliana (Mouse-ear cress).